The primary structure comprises 364 residues: DNA replication and repair protein RecF (364 aa).

30 to 37 is a binding site for ATP; the sequence is GNNGMGKT.

It belongs to the RecF family.

It is found in the cytoplasm. The RecF protein is involved in DNA metabolism; it is required for DNA replication and normal SOS inducibility. RecF binds preferentially to single-stranded, linear DNA. It also seems to bind ATP. The protein is DNA replication and repair protein RecF of Porphyromonas gingivalis (strain ATCC BAA-308 / W83).